Reading from the N-terminus, the 333-residue chain is Holliday junction branch migration complex subunit RuvB (333 aa).

Residues 1–182 are large ATPase domain (RuvB-L); sequence MDERLLSGES…FGVLSRLEYY (182 aa). Residues L21, R22, G63, K66, T67, T68, 129–131, R172, Y182, and R219 contribute to the ATP site; that span reads EDF. T67 is a Mg(2+) binding site. The segment at 183 to 253 is small ATPAse domain (RuvB-S); that stretch reads TVDQLSAIVE…ITQMALELLQ (71 aa). The segment at 256 to 333 is head domain (RuvB-H); it reads KLGLDHIDHK…EHFGMEIPKV (78 aa). The DNA site is built by R311 and R316.

This sequence belongs to the RuvB family. As to quaternary structure, homohexamer. Forms an RuvA(8)-RuvB(12)-Holliday junction (HJ) complex. HJ DNA is sandwiched between 2 RuvA tetramers; dsDNA enters through RuvA and exits via RuvB. An RuvB hexamer assembles on each DNA strand where it exits the tetramer. Each RuvB hexamer is contacted by two RuvA subunits (via domain III) on 2 adjacent RuvB subunits; this complex drives branch migration. In the full resolvosome a probable DNA-RuvA(4)-RuvB(12)-RuvC(2) complex forms which resolves the HJ.

The protein localises to the cytoplasm. It catalyses the reaction ATP + H2O = ADP + phosphate + H(+). Its function is as follows. The RuvA-RuvB-RuvC complex processes Holliday junction (HJ) DNA during genetic recombination and DNA repair, while the RuvA-RuvB complex plays an important role in the rescue of blocked DNA replication forks via replication fork reversal (RFR). RuvA specifically binds to HJ cruciform DNA, conferring on it an open structure. The RuvB hexamer acts as an ATP-dependent pump, pulling dsDNA into and through the RuvAB complex. RuvB forms 2 homohexamers on either side of HJ DNA bound by 1 or 2 RuvA tetramers; 4 subunits per hexamer contact DNA at a time. Coordinated motions by a converter formed by DNA-disengaged RuvB subunits stimulates ATP hydrolysis and nucleotide exchange. Immobilization of the converter enables RuvB to convert the ATP-contained energy into a lever motion, pulling 2 nucleotides of DNA out of the RuvA tetramer per ATP hydrolyzed, thus driving DNA branch migration. The RuvB motors rotate together with the DNA substrate, which together with the progressing nucleotide cycle form the mechanistic basis for DNA recombination by continuous HJ branch migration. Branch migration allows RuvC to scan DNA until it finds its consensus sequence, where it cleaves and resolves cruciform DNA. The polypeptide is Holliday junction branch migration complex subunit RuvB (Bacillus cereus (strain G9842)).